Consider the following 588-residue polypeptide: Cryptochrome-1 (588 aa).

In terms of domain architecture, Photolyase/cryptochrome alpha/beta spans Val3–Leu132. A Glycyl lysine isopeptide (Lys-Gly) (interchain with G-Cter in ubiquitin) cross-link involves residue Lys11. The LIR 1 motif lies at Asn50–Phe54. Ser71 carries the post-translational modification Phosphoserine; by AMPK. The short motif at Asp82–Leu87 is the LIR 2 element. A Glycyl lysine isopeptide (Lys-Gly) (interchain with G-Cter in ubiquitin) cross-link involves residue Lys107. The LIR 3 motif lies at Lys151–Leu156. Residue Lys159 forms a Glycyl lysine isopeptide (Lys-Gly) (interchain with G-Cter in ubiquitin) linkage. A Phosphoserine; by MAPK modification is found at Ser247. An FAD-binding site is contributed by Ser252. Short sequence motifs (LIR) lie at residues Leu255–Leu260 and Asp271–Val276. At Ser280 the chain carries Phosphoserine; by AMPK. Residues Ser285–Leu290 carry the LIR 6 motif. Position 289 (Gln289) interacts with FAD. Lys329 participates in a covalent cross-link: Glycyl lysine isopeptide (Lys-Gly) (interchain with G-Cter in ubiquitin). Positions Thr335–Trp339 match the LIR 7 motif. An FAD-binding site is contributed by His355. The segment at Trp371–Met470 is required for inhibition of CLOCK-BMAL1-mediated transcription. An LIR 8 motif is present at residues Lys379 to Leu384. An FAD-binding site is contributed by Asp387 to Asp389. Short sequence motifs (LIR) lie at residues Gly395–Leu400, His411–Val416, and Arg430–Val435. The interval Val471–Arg493 is interaction with TIMELESS. Residue Lys485 forms a Glycyl lysine isopeptide (Lys-Gly) (interchain with G-Cter in ubiquitin) linkage. Short sequence motifs (LIR) lie at residues Gln486–Leu491 and Ser492–Leu497. Positions Gly511–Asn588 are disordered. Over residues Asp545 to Arg568 the composition is skewed to polar residues. Residue Lys567 forms a Glycyl lysine isopeptide (Lys-Gly) (interchain with G-Cter in ubiquitin) linkage. Ser570 carries the post-translational modification Phosphoserine.

This sequence belongs to the DNA photolyase class-1 family. As to quaternary structure, component of the circadian core oscillator, which includes the CRY proteins, CLOCK or NPAS2, BMAL1 or BMAL2, CSNK1D and/or CSNK1E, TIMELESS, and the PER proteins. Interacts directly with TIMELESS. Interacts directly with PER1, PER2 and PER3; interaction with PER2 inhibits its ubiquitination and vice versa. Interacts with FBXL21. Interacts with FBXL3. Interacts with CLOCK-BMAL1 independently of PER2 and DNA. Interacts with HDAC1, HDAC2 and SIN3B. Interacts with nuclear receptors AR, NR1D1, NR3C1/GR, RORA and RORC; the interaction with at least NR3C1/GR is ligand dependent. Interacts with PRKDC. Interacts with the G protein subunit alpha GNAS; the interaction may block GPCR-mediated regulation of cAMP concentrations. Interacts with PRMT5. Interacts with EZH2. Interacts with MYBBP1A, DOCK7, HNRNPU, RPL7A, RPL8 and RPS3. Interacts with PPP5C (via TPR repeats). Interacts with MAP1LC3B. Interacts with CLOCK. Interacts with BMAL1. Interacts weakly with HDAC3; this interaction is enhanced in the presence of FBXL3. Interacts with TRIM28, KCTD5 and DDB1. Interacts with FOXO1. Interacts with DTL and DDB1-CUL4A complex. Interacts with HNF4A. Interacts with PSMD2 in a KDM8-dependent manner. Interacts with KDM8 in a FBXL3-dependent manner. Interacts with PPARG in a ligand-dependent manner. Interacts with PPARD (via domain NR LBD) and NR1I2 (via domain NR LBD) in a ligand-dependent manner. Interacts with PPARA, NR1I3 and VDR. Requires FAD as cofactor. (6R)-5,10-methylene-5,6,7,8-tetrahydrofolate serves as cofactor. Post-translationally, phosphorylation on Ser-247 by MAPK is important for the inhibition of CLOCK-BMAL1-mediated transcriptional activity. Phosphorylation by CSNK1E requires interaction with PER1 or PER2. Phosphorylation at Ser-71 and Ser-280 by AMPK decreases protein stability. Phosphorylation at Ser-570 exhibits a robust circadian rhythm with a peak at CT8, increases protein stability, prevents SCF(FBXL3)-mediated degradation and is antagonized by interaction with PRKDC. In terms of processing, ubiquitinated by the SCF(FBXL3) and SCF(FBXL21) complexes, regulating the balance between degradation and stabilization. The SCF(FBXL3) complex is mainly nuclear and mediates ubiquitination and subsequent degradation of CRY1. In contrast, cytoplasmic SCF(FBXL21) complex-mediated ubiquitination leads to stabilize CRY1 and counteract the activity of the SCF(FBXL3) complex. The SCF(FBXL3) and SCF(FBXL21) complexes probably mediate ubiquitination at different Lys residues. Ubiquitination at Lys-11 and Lys-107 are specifically ubiquitinated by the SCF(FBXL21) complex but not by the SCF(FBXL3) complex. Ubiquitination may be inhibited by PER2. Deubiquitinated by USP7. Undergoes autophagy-mediated degradation in the liver in a time-dependent manner. Autophagic degradation of CRY1 (an inhibitor of gluconeogenesis) occurs during periods of reduced feeding allowing induction of gluconeogenesis and maintenance of blood glucose levels.

Its subcellular location is the cytoplasm. The protein localises to the nucleus. Functionally, transcriptional repressor which forms a core component of the circadian clock. The circadian clock, an internal time-keeping system, regulates various physiological processes through the generation of approximately 24 hour circadian rhythms in gene expression, which are translated into rhythms in metabolism and behavior. It is derived from the Latin roots 'circa' (about) and 'diem' (day) and acts as an important regulator of a wide array of physiological functions including metabolism, sleep, body temperature, blood pressure, endocrine, immune, cardiovascular, and renal function. Consists of two major components: the central clock, residing in the suprachiasmatic nucleus (SCN) of the brain, and the peripheral clocks that are present in nearly every tissue and organ system. Both the central and peripheral clocks can be reset by environmental cues, also known as Zeitgebers (German for 'timegivers'). The predominant Zeitgeber for the central clock is light, which is sensed by retina and signals directly to the SCN. The central clock entrains the peripheral clocks through neuronal and hormonal signals, body temperature and feeding-related cues, aligning all clocks with the external light/dark cycle. Circadian rhythms allow an organism to achieve temporal homeostasis with its environment at the molecular level by regulating gene expression to create a peak of protein expression once every 24 hours to control when a particular physiological process is most active with respect to the solar day. Transcription and translation of core clock components (CLOCK, NPAS2, BMAL1, BMAL2, PER1, PER2, PER3, CRY1 and CRY2) plays a critical role in rhythm generation, whereas delays imposed by post-translational modifications (PTMs) are important for determining the period (tau) of the rhythms (tau refers to the period of a rhythm and is the length, in time, of one complete cycle). A diurnal rhythm is synchronized with the day/night cycle, while the ultradian and infradian rhythms have a period shorter and longer than 24 hours, respectively. Disruptions in the circadian rhythms contribute to the pathology of cardiovascular diseases, cancer, metabolic syndromes and aging. A transcription/translation feedback loop (TTFL) forms the core of the molecular circadian clock mechanism. Transcription factors, CLOCK or NPAS2 and BMAL1 or BMAL2, form the positive limb of the feedback loop, act in the form of a heterodimer and activate the transcription of core clock genes and clock-controlled genes (involved in key metabolic processes), harboring E-box elements (5'-CACGTG-3') within their promoters. The core clock genes: PER1/2/3 and CRY1/2 which are transcriptional repressors form the negative limb of the feedback loop and interact with the CLOCK|NPAS2-BMAL1|BMAL2 heterodimer inhibiting its activity and thereby negatively regulating their own expression. This heterodimer also activates nuclear receptors NR1D1/2 and RORA/B/G, which form a second feedback loop and which activate and repress BMAL1 transcription, respectively. CRY1 and CRY2 have redundant functions but also differential and selective contributions at least in defining the pace of the SCN circadian clock and its circadian transcriptional outputs. More potent transcriptional repressor in cerebellum and liver than CRY2, though more effective in lengthening the period of the SCN oscillator. On its side, CRY2 seems to play a critical role in tuning SCN circadian period by opposing the action of CRY1. With CRY2, is dispensable for circadian rhythm generation but necessary for the development of intercellular networks for rhythm synchrony. Capable of translocating circadian clock core proteins such as PER proteins to the nucleus. Interacts with CLOCK-BMAL1 independently of PER proteins and is found at CLOCK-BMAL1-bound sites, suggesting that CRY may act as a molecular gatekeeper to maintain CLOCK-BMAL1 in a poised and repressed state until the proper time for transcriptional activation. Represses the CLOCK-BMAL1 induced transcription of BHLHE40/DEC1, ATF4, MTA1, KLF10 and NAMPT. May repress circadian target genes expression in collaboration with HDAC1 and HDAC2 through histone deacetylation. Mediates the clock-control activation of ATR and modulates ATR-mediated DNA damage checkpoint. In liver, mediates circadian regulation of cAMP signaling and gluconeogenesis by binding to membrane-coupled G proteins and blocking glucagon-mediated increases in intracellular cAMP concentrations and CREB1 phosphorylation. Inhibits hepatic gluconeogenesis by decreasing nuclear FOXO1 levels that down-regulates gluconeogenic gene expression. Besides its role in the maintenance of the circadian clock, is also involved in the regulation of other processes. Represses glucocorticoid receptor NR3C1/GR-induced transcriptional activity by binding to glucocorticoid response elements (GREs). Plays a key role in glucose and lipid metabolism modulation, in part, through the transcriptional regulation of genes involved in these pathways, such as LEP or ACSL4. Represses PPARD and its target genes in the skeletal muscle and limits exercise capacity. Plays an essential role in the generation of circadian rhythms in the retina. Represses the transcriptional activity of NR1I2. The sequence is that of Cryptochrome-1 (Cry1) from Rattus norvegicus (Rat).